The following is a 574-amino-acid chain: Desiccation/radiation resistance protein DR_1769 (574 aa).

An N-terminal signal peptide occupies residues 1-33; sequence MPDPAARRFSLPPFPLAALALSVALLGAPASLA. Residues 400-438 show a composition bias toward low complexity; that stretch reads TAQTQARQAAAAASTSQQPRLPTLAQAPAPTPAPAQTTP. The interval 400–461 is disordered; it reads TAQTQARQAA…APVPPVASPA (62 aa). The span at 439–459 shows a compositional bias: pro residues; it reads RPQPTPAQPATPAAPVPPVAS.

Its function is as follows. Plays an important role in resistance to desiccation and radiation, maybe by protecting genome integrity under extreme conditions. The protein is Desiccation/radiation resistance protein DR_1769 of Deinococcus radiodurans (strain ATCC 13939 / DSM 20539 / JCM 16871 / CCUG 27074 / LMG 4051 / NBRC 15346 / NCIMB 9279 / VKM B-1422 / R1).